Consider the following 612-residue polypeptide: Probable Xaa-Pro aminopeptidase P (612 aa).

Residues aspartate 409, aspartate 420, glutamate 518, and glutamate 532 each contribute to the Mn(2+) site.

It belongs to the peptidase M24B family. Mn(2+) is required as a cofactor.

It catalyses the reaction Release of any N-terminal amino acid, including proline, that is linked to proline, even from a dipeptide or tripeptide.. Catalyzes the removal of a penultimate prolyl residue from the N-termini of peptides. The protein is Probable Xaa-Pro aminopeptidase P (AMPP) of Verticillium alfalfae (strain VaMs.102 / ATCC MYA-4576 / FGSC 10136) (Verticillium wilt of alfalfa).